A 187-amino-acid chain; its full sequence is Photosystem I assembly protein Ycf4 (187 aa).

Transmembrane regions (helical) follow at residues Ile-23–Ile-43 and Phe-70–Val-90.

Belongs to the Ycf4 family.

The protein localises to the plastid. The protein resides in the chloroplast thylakoid membrane. Functionally, seems to be required for the assembly of the photosystem I complex. The polypeptide is Photosystem I assembly protein Ycf4 (Chara vulgaris (Common stonewort)).